Here is a 327-residue protein sequence, read N- to C-terminus: Methionyl-tRNA formyltransferase (327 aa).

121–124 (SLLP) serves as a coordination point for (6S)-5,6,7,8-tetrahydrofolate.

The protein belongs to the Fmt family.

It catalyses the reaction L-methionyl-tRNA(fMet) + (6R)-10-formyltetrahydrofolate = N-formyl-L-methionyl-tRNA(fMet) + (6S)-5,6,7,8-tetrahydrofolate + H(+). Its function is as follows. Attaches a formyl group to the free amino group of methionyl-tRNA(fMet). The formyl group appears to play a dual role in the initiator identity of N-formylmethionyl-tRNA by promoting its recognition by IF2 and preventing the misappropriation of this tRNA by the elongation apparatus. In Burkholderia pseudomallei (strain 1106a), this protein is Methionyl-tRNA formyltransferase.